Consider the following 374-residue polypeptide: tRNA-specific 2-thiouridylase MnmA (374 aa).

ATP is bound by residues 10 to 17 (AMSGGVDS) and L36. C111 serves as the catalytic Nucleophile. C111 and C209 are joined by a disulfide. G135 lines the ATP pocket. Residues 159 to 161 (KDQ) form an interaction with tRNA region. The active-site Cysteine persulfide intermediate is C209.

The protein belongs to the MnmA/TRMU family.

It localises to the cytoplasm. It carries out the reaction S-sulfanyl-L-cysteinyl-[protein] + uridine(34) in tRNA + AH2 + ATP = 2-thiouridine(34) in tRNA + L-cysteinyl-[protein] + A + AMP + diphosphate + H(+). Functionally, catalyzes the 2-thiolation of uridine at the wobble position (U34) of tRNA, leading to the formation of s(2)U34. This chain is tRNA-specific 2-thiouridylase MnmA, found in Acidobacterium capsulatum (strain ATCC 51196 / DSM 11244 / BCRC 80197 / JCM 7670 / NBRC 15755 / NCIMB 13165 / 161).